The following is a 239-amino-acid chain: Geranylgeranylglyceryl phosphate synthase (239 aa).

Residues aspartate 18 and serine 45 each coordinate Mg(2+). Sn-glycerol 1-phosphate is bound by residues 166–172 (YLEAGSG), 197–198 (GG), and 219–220 (GT).

Belongs to the GGGP/HepGP synthase family. Group II subfamily. Mg(2+) is required as a cofactor.

The protein resides in the cytoplasm. It carries out the reaction sn-glycerol 1-phosphate + (2E,6E,10E)-geranylgeranyl diphosphate = sn-3-O-(geranylgeranyl)glycerol 1-phosphate + diphosphate. Its pathway is membrane lipid metabolism; glycerophospholipid metabolism. In terms of biological role, prenyltransferase that catalyzes the transfer of the geranylgeranyl moiety of geranylgeranyl diphosphate (GGPP) to the C3 hydroxyl of sn-glycerol-1-phosphate (G1P). This reaction is the first ether-bond-formation step in the biosynthesis of archaeal membrane lipids. This chain is Geranylgeranylglyceryl phosphate synthase, found in Pyrobaculum islandicum (strain DSM 4184 / JCM 9189 / GEO3).